A 361-amino-acid chain; its full sequence is Histidine biosynthesis bifunctional protein HisB (361 aa).

Residues 1–172 (MTQPTLFIDR…PKTTACKRPP (172 aa)) are histidinol-phosphatase. The Nucleophile role is filled by D9. Positions 9 and 11 each coordinate Mg(2+). The active-site Proton donor is the D11. Residues C92, H94, C100, and C102 each contribute to the Zn(2+) site. D129 lines the Mg(2+) pocket. Positions 173–361 (RYAEVVRTTK…NELPSSKGVL (189 aa)) are imidazoleglycerol-phosphate dehydratase.

The protein in the N-terminal section; belongs to the histidinol-phosphatase family. It in the C-terminal section; belongs to the imidazoleglycerol-phosphate dehydratase family. The cofactor is Mg(2+). Requires Zn(2+) as cofactor.

The protein localises to the cytoplasm. It carries out the reaction D-erythro-1-(imidazol-4-yl)glycerol 3-phosphate = 3-(imidazol-4-yl)-2-oxopropyl phosphate + H2O. The enzyme catalyses L-histidinol phosphate + H2O = L-histidinol + phosphate. It functions in the pathway amino-acid biosynthesis; L-histidine biosynthesis; L-histidine from 5-phospho-alpha-D-ribose 1-diphosphate: step 6/9. Its pathway is amino-acid biosynthesis; L-histidine biosynthesis; L-histidine from 5-phospho-alpha-D-ribose 1-diphosphate: step 8/9. This Actinobacillus pleuropneumoniae serotype 3 (strain JL03) protein is Histidine biosynthesis bifunctional protein HisB.